The following is a 285-amino-acid chain: 4-diphosphocytidyl-2-C-methyl-D-erythritol kinase (285 aa).

The active site involves K28. Residue P109–A119 participates in ATP binding. D148 is a catalytic residue.

It belongs to the GHMP kinase family. IspE subfamily.

It catalyses the reaction 4-CDP-2-C-methyl-D-erythritol + ATP = 4-CDP-2-C-methyl-D-erythritol 2-phosphate + ADP + H(+). It functions in the pathway isoprenoid biosynthesis; isopentenyl diphosphate biosynthesis via DXP pathway; isopentenyl diphosphate from 1-deoxy-D-xylulose 5-phosphate: step 3/6. In terms of biological role, catalyzes the phosphorylation of the position 2 hydroxy group of 4-diphosphocytidyl-2C-methyl-D-erythritol. This Novosphingobium aromaticivorans (strain ATCC 700278 / DSM 12444 / CCUG 56034 / CIP 105152 / NBRC 16084 / F199) protein is 4-diphosphocytidyl-2-C-methyl-D-erythritol kinase.